Here is a 359-residue protein sequence, read N- to C-terminus: MMIGESHRGFNPTVHIPPWPLSEDLTVSDIYGSPDGGSSMMEALAELQRYLPSNEPDPDSDPDLSGPDSPIDAYTCDHFRMYEFKVRRCARGRSHDWTECPYAHPGEKARRRDPRKFHYSGTACPEFRKGCCKRGDACEFSHGVFECWLHPARYRTQPCKDGGNCRRRVCFFAHSPDQIRVLPNQSPDRVDSFDVLSPTIRRAFQFSISPSSNSPPVSPRGDSDSSCSLLSRSLGSNLGNDVVASLRNLQLNKVKSSLSSSYNNQIGGYGSGFGSPRGSVLGPGFRSLPTTPTRPGFMNIWENGLEEEPAMERVESGRELRAQLFEKLSKENCMGRIEPDPDQGAGDTPDVGWVSDLVM.

3 consecutive C3H1-type zinc fingers follow at residues 75 to 107, 119 to 145, and 153 to 177; these read TCDH…HPGE, YSGT…HGVF, and RYRT…HSPD. 2 disordered regions span residues 207 to 226 and 334 to 359; these read SISP…SDSS and MGRI…DLVM.

In Arabidopsis thaliana (Mouse-ear cress), this protein is Zinc finger CCCH domain-containing protein 20.